Here is a 356-residue protein sequence, read N- to C-terminus: 4-hydroxy-3-methylbut-2-en-1-yl diphosphate synthase (flavodoxin) (356 aa).

Residues Cys262, Cys265, Cys297, and Glu304 each coordinate [4Fe-4S] cluster.

It belongs to the IspG family. The cofactor is [4Fe-4S] cluster.

It catalyses the reaction (2E)-4-hydroxy-3-methylbut-2-enyl diphosphate + oxidized [flavodoxin] + H2O + 2 H(+) = 2-C-methyl-D-erythritol 2,4-cyclic diphosphate + reduced [flavodoxin]. Its pathway is isoprenoid biosynthesis; isopentenyl diphosphate biosynthesis via DXP pathway; isopentenyl diphosphate from 1-deoxy-D-xylulose 5-phosphate: step 5/6. Its function is as follows. Converts 2C-methyl-D-erythritol 2,4-cyclodiphosphate (ME-2,4cPP) into 1-hydroxy-2-methyl-2-(E)-butenyl 4-diphosphate. The chain is 4-hydroxy-3-methylbut-2-en-1-yl diphosphate synthase (flavodoxin) from Campylobacter fetus subsp. fetus (strain 82-40).